Consider the following 59-residue polypeptide: Dybowskin-1CDYa (59 aa).

An N-terminal signal peptide occupies residues 1-22 (MFTLKKSLLLLFFLGTINFSLC). Residues 23–44 (EEERNAEEERRDYPEERDVEVE) constitute a propeptide that is removed on maturation.

Belongs to the frog skin active peptide (FSAP) family. Brevinin subfamily. Expressed by the skin glands.

It is found in the secreted. Its function is as follows. Antimicrobial peptide. Has activity against the Gram-positive bacterium S.aureus (MIC=6 uM) and the Gram-negative bacterium E.coli (MIC=3 uM). Lacks hemolytic activity against human erythrocytes. This Rana dybowskii (Dybovsky's frog) protein is Dybowskin-1CDYa.